The chain runs to 381 residues: L-lactate dehydrogenase (381 aa).

The FMN hydroxy acid dehydrogenase domain occupies 1–380; sequence MIISSASDYR…KPEALVDLSK (380 aa). Tyr-24 is a substrate binding site. Residues Ser-106 and Gln-127 each contribute to the FMN site. Tyr-129 contacts substrate. FMN is bound at residue Thr-155. Arg-164 provides a ligand contact to substrate. Residue Lys-251 coordinates FMN. The active-site Proton acceptor is His-275. Position 278 (Arg-278) interacts with substrate. 306–330 contacts FMN; sequence DSGIRNGLDIVRMLALGADATMLGR.

This sequence belongs to the FMN-dependent alpha-hydroxy acid dehydrogenase family. FMN serves as cofactor.

It localises to the cell inner membrane. It catalyses the reaction (S)-lactate + A = pyruvate + AH2. In terms of biological role, catalyzes the conversion of L-lactate to pyruvate. Is coupled to the respiratory chain. In Haemophilus influenzae (strain 86-028NP), this protein is L-lactate dehydrogenase.